Consider the following 143-residue polypeptide: AP-2 complex subunit sigma (143 aa).

Belongs to the adaptor complexes small subunit family. In terms of assembly, adaptor protein complex 2 (AP-2) is a heterotetramer composed of two large adaptins (alpha-type subunit apl3 and beta-type subunit apl1), a medium chain (mu-type subunit apm4) and a small adaptin (sigma-type subunit aps2).

It is found in the cell membrane. The protein resides in the membrane. Its subcellular location is the coated pit. Its function is as follows. Component of the adaptor complexes which link clathrin to receptors in coated vesicles. Clathrin-associated protein complexes are believed to interact with the cytoplasmic tails of membrane proteins, leading to their selection and concentration. The protein is AP-2 complex subunit sigma (aps2) of Schizosaccharomyces pombe (strain 972 / ATCC 24843) (Fission yeast).